A 341-amino-acid chain; its full sequence is Glycerol-3-phosphate dehydrogenase [NAD(P)+] (341 aa).

4 residues coordinate NADPH: S15, W16, R36, and K110. K110, G139, and S141 together coordinate sn-glycerol 3-phosphate. A143 lines the NADPH pocket. 5 residues coordinate sn-glycerol 3-phosphate: K194, D247, S257, R258, and N259. K194 functions as the Proton acceptor in the catalytic mechanism. R258 is a binding site for NADPH. V282 and E284 together coordinate NADPH.

The protein belongs to the NAD-dependent glycerol-3-phosphate dehydrogenase family.

The protein localises to the cytoplasm. It catalyses the reaction sn-glycerol 3-phosphate + NAD(+) = dihydroxyacetone phosphate + NADH + H(+). The catalysed reaction is sn-glycerol 3-phosphate + NADP(+) = dihydroxyacetone phosphate + NADPH + H(+). It functions in the pathway membrane lipid metabolism; glycerophospholipid metabolism. Its function is as follows. Catalyzes the reduction of the glycolytic intermediate dihydroxyacetone phosphate (DHAP) to sn-glycerol 3-phosphate (G3P), the key precursor for phospholipid synthesis. The protein is Glycerol-3-phosphate dehydrogenase [NAD(P)+] of Xanthomonas campestris pv. campestris (strain 8004).